We begin with the raw amino-acid sequence, 2098 residues long: Unconventional myosin heavy chain 6 (2098 aa).

Residues 62-732 (QGVEDMCQLG…HDLVLEQEYY (671 aa)) form the Myosin motor domain. 155 to 162 (GESGAGKT) contributes to the ATP binding site. Actin-binding regions lie at residues 609–631 (LEQLMSQLTQTHPFFIRCIKPNE) and 711–725 (QLGKTKVFLKDKHDL). 3 IQ domains span residues 735-757 (LKDKAIVIQKNVRRWLVRKDFEK), 758-787 (QRQAAVTIQTAWRGFDQRKRYRQIISGFSR), and 804-833 (LRKTIIQFQAVCRGSLVRRQVGEKRKRGEK). The segment at 860-898 (FLPSDGKDSGNENDSADSSRRGSYSRLHTSPVMPPANIP) is disordered. The MyTH4 1 domain occupies 929–1168 (HVKKPLKTAL…PSYVELQANK (240 aa)). One can recognise a Ras-associating domain in the interval 1171-1211 (KPVVLAVTFMDGSVKTLCADSATTAAELCKQLAEKVGLTNS). The FERM 1 domain occupies 1173-1481 (VVLAVTFMDG…MFLEGLKKRS (309 aa)). Residues 1479–1547 (KRSRYLVAIK…RAENVYVLPT (69 aa)) enclose the SH3 domain. A MyTH4 2 domain is found at 1624–1772 (FSREHIDQPL…PHLVEVEAIQ (149 aa)). Positions 1778 to 2086 (IFHKVFFPDN…SYISLLISNQ (309 aa)) constitute an FERM 2 domain.

It belongs to the TRAFAC class myosin-kinesin ATPase superfamily. Myosin family. In terms of assembly, interacts with unc-98.

It localises to the cytoplasm. Its function is as follows. Myosins are actin-based motor molecules with ATPase activity. Unconventional myosins serve in intracellular movements. Their highly divergent tails are presumed to bind to membranous compartments, which would be moved relative to actin filaments. The sequence is that of Unconventional myosin heavy chain 6 from Caenorhabditis elegans.